Consider the following 234-residue polypeptide: Glucosamine-6-phosphate deaminase (234 aa).

Asp-62 acts as the Proton acceptor; for enolization step in catalysis. Residue Asn-128 is the For ring-opening step of the active site. His-130 serves as the catalytic Proton acceptor; for ring-opening step. Glu-135 serves as the catalytic For ring-opening step.

It belongs to the glucosamine/galactosamine-6-phosphate isomerase family. NagB subfamily.

The catalysed reaction is alpha-D-glucosamine 6-phosphate + H2O = beta-D-fructose 6-phosphate + NH4(+). It functions in the pathway amino-sugar metabolism; N-acetylneuraminate degradation; D-fructose 6-phosphate from N-acetylneuraminate: step 5/5. Functionally, catalyzes the reversible isomerization-deamination of glucosamine 6-phosphate (GlcN6P) to form fructose 6-phosphate (Fru6P) and ammonium ion. This chain is Glucosamine-6-phosphate deaminase, found in Streptococcus pyogenes serotype M18 (strain MGAS8232).